Consider the following 346-residue polypeptide: Olfactory receptor 13D1 (346 aa).

The Extracellular portion of the chain corresponds to 1–57; the sequence is MYRFTDFDVSNISIYLNHVLFYTTQQAGDLEHMETRNYSAMTEFFLVGLSQYPELQL. N-linked (GlcNAc...) asparagine glycosylation occurs at N37. Residues 58 to 78 form a helical membrane-spanning segment; the sequence is FLFLLCLIMYMIILLGNSLLI. The Cytoplasmic portion of the chain corresponds to 79–86; it reads IITILDSR. Residues 87–107 form a helical membrane-spanning segment; it reads LHTPMYFFLGNLSFLDICYTS. At 108–131 the chain is on the extracellular side; that stretch reads SSIPPMLIIFMSERKSISFIGCAL. C129 and C221 are oxidised to a cystine. A helical transmembrane segment spans residues 132-152; it reads QMVVSLGLGSTECVLLAVMAY. Topologically, residues 153–171 are cytoplasmic; sequence DHYVAICNPLRYSIIMNGV. Residues 172–192 traverse the membrane as a helical segment; sequence LYVQMAAWSWIIGCLTSLLQT. Topologically, residues 193-229 are extracellular; the sequence is VLTMMLPFCGNNVIDHITCEILALLKLVCSDITINVL. The chain crosses the membrane as a helical span at residues 230-249; sequence IMTVTNIVSLVILLLLIFIS. The Cytoplasmic segment spans residues 250–269; the sequence is YVFILSSILRINCAEGRKKA. A helical transmembrane segment spans residues 270-290; it reads FSTCSAHSIVVILFYGSALFM. At 291 to 303 the chain is on the extracellular side; it reads YMKPKSKNTNTSD. The N-linked (GlcNAc...) asparagine glycan is linked to N300. A helical membrane pass occupies residues 304 to 324; the sequence is EIIGLSYGVVSPMLNPIIYSL. At 325-346 the chain is on the cytoplasmic side; the sequence is RNKEVKEAVKKVLSRHLHLLKM.

It belongs to the G-protein coupled receptor 1 family.

The protein localises to the cell membrane. Functionally, odorant receptor. This chain is Olfactory receptor 13D1 (OR13D1), found in Homo sapiens (Human).